The following is a 270-amino-acid chain: uncharacterized protein (270 aa).

Residues 166 to 186 form a disordered region; sequence RRKENNISNESVSEEPESPLF.

This is an uncharacterized protein from Ostreid herpesvirus 1 (isolate France) (OsHV-1).